The chain runs to 582 residues: MKYRTHKCNELSLDHVGEHVRLSGWVHRYRNHGGVVFIDLRDRFGITQIVCRQEENPELHQLMDQVRSEWVLCVEGLVCARLEGMENPNLVTGSIEVEVSSLEVLSRAQNLPFSISDEHINVNEELRLTYRYLDMRRGDILDRLMCRHKVMLACRQYLDEQGFTEVVTPILGKSTPEGARDYLVPSRIYPGNFYALPQSPQLFKQILMVGGLDRYFQIATCFRDEDLRADRQPEFTQIDMEMSFGGPEDLFPVVEELVTRLFAVKGIELKAPFLRMTYQEAKDSYGTDKPDLRFGLRLKNCCEYARKFTFSIFLDQLAHGGTVKGFCVPGGADMSRKQLDIYTDFVKRYGSMGLVWIKKQDGGVSSNVAKFASEDVFQEMFEAFEAKDQDILLLIAAPEAVANQALDHLRRLIAKERQLYDSTQYNFVWITDFPLFAKEEGELCPEHHPFTAPLDEDISLLDSDPFAVRSSSYDLVLNGYEIASGSQRIHNPDLQNKIFALLKLSQESVKEKFGFFIDALSFGTPPHLGIALGLDRIMMVLTGAETIREVIAFPKTQKAGDLMMSAPSEILPIQLKELGLKL.

Glutamate 177 serves as a coordination point for L-aspartate. The aspartate stretch occupies residues 201 to 204 (QLFK). L-aspartate is bound at residue arginine 223. Residues 223-225 (RDE) and glutamine 232 each bind ATP. Residue histidine 447 participates in L-aspartate binding. Glutamate 481 is a binding site for ATP. Arginine 488 contributes to the L-aspartate binding site. An ATP-binding site is contributed by 533-536 (GLDR).

Belongs to the class-II aminoacyl-tRNA synthetase family. Type 1 subfamily. Homodimer.

The protein localises to the cytoplasm. The catalysed reaction is tRNA(Asx) + L-aspartate + ATP = L-aspartyl-tRNA(Asx) + AMP + diphosphate. In terms of biological role, aspartyl-tRNA synthetase with relaxed tRNA specificity since it is able to aspartylate not only its cognate tRNA(Asp) but also tRNA(Asn). Reaction proceeds in two steps: L-aspartate is first activated by ATP to form Asp-AMP and then transferred to the acceptor end of tRNA(Asp/Asn). The sequence is that of Aspartate--tRNA(Asp/Asn) ligase from Chlamydia trachomatis serovar L2 (strain ATCC VR-902B / DSM 19102 / 434/Bu).